The primary structure comprises 568 residues: Urease subunit alpha (568 aa).

In terms of domain architecture, Urease spans Gly130 to Phe568. Ni(2+) contacts are provided by His135, His137, and Lys218. An N6-carboxylysine modification is found at Lys218. Substrate is bound at residue His220. 2 residues coordinate Ni(2+): His247 and His273. His321 functions as the Proton donor in the catalytic mechanism. A Ni(2+)-binding site is contributed by Asp361.

Belongs to the metallo-dependent hydrolases superfamily. Urease alpha subunit family. As to quaternary structure, heterotrimer of UreA (gamma), UreB (beta) and UreC (alpha) subunits. Three heterotrimers associate to form the active enzyme. Requires Ni cation as cofactor. In terms of processing, carboxylation allows a single lysine to coordinate two nickel ions.

The protein resides in the cytoplasm. The enzyme catalyses urea + 2 H2O + H(+) = hydrogencarbonate + 2 NH4(+). Its pathway is nitrogen metabolism; urea degradation; CO(2) and NH(3) from urea (urease route): step 1/1. In Burkholderia cenocepacia (strain ATCC BAA-245 / DSM 16553 / LMG 16656 / NCTC 13227 / J2315 / CF5610) (Burkholderia cepacia (strain J2315)), this protein is Urease subunit alpha.